A 55-amino-acid polypeptide reads, in one-letter code: Sec-independent protein translocase protein TatA (55 aa).

The chain crosses the membrane as a helical span at residues 1–21 (MFGELGVPEVLFILGIALLIF).

The protein belongs to the TatA/E family. As to quaternary structure, forms a complex with TatC.

The protein resides in the cell inner membrane. Functionally, part of the twin-arginine translocation (Tat) system that transports large folded proteins containing a characteristic twin-arginine motif in their signal peptide across membranes. TatA could form the protein-conducting channel of the Tat system. The chain is Sec-independent protein translocase protein TatA from Koribacter versatilis (strain Ellin345).